A 286-amino-acid chain; its full sequence is Pyridoxal kinase PdxY (286 aa).

Substrate-binding positions include Ser9 and 44 to 45; that span reads TQ. Residues Asp111, Ala143, Glu148, Lys181, and 208–211 contribute to the ATP site; that span reads RPLV. Position 223 (Asp223) interacts with substrate.

The protein belongs to the pyridoxine kinase family. PdxY subfamily. Homodimer. The cofactor is Mg(2+).

It catalyses the reaction pyridoxal + ATP = pyridoxal 5'-phosphate + ADP + H(+). It functions in the pathway cofactor metabolism; pyridoxal 5'-phosphate salvage; pyridoxal 5'-phosphate from pyridoxal: step 1/1. Pyridoxal kinase involved in the salvage pathway of pyridoxal 5'-phosphate (PLP). Catalyzes the phosphorylation of pyridoxal to PLP. The polypeptide is Pyridoxal kinase PdxY (Salmonella paratyphi A (strain ATCC 9150 / SARB42)).